Here is a 270-residue protein sequence, read N- to C-terminus: 3-phenylpropionate-dihydrodiol/cinnamic acid-dihydrodiol dehydrogenase (270 aa).

An NAD(+)-binding site is contributed by 10 to 34; sequence FITGGGSGLGLALVERFIEKGAQVA. Residue Ser-143 participates in substrate binding. The active-site Proton acceptor is Tyr-156.

This sequence belongs to the short-chain dehydrogenases/reductases (SDR) family.

It catalyses the reaction 3-(cis-5,6-dihydroxycyclohexa-1,3-dien-1-yl)propanoate + NAD(+) = 3-(2,3-dihydroxyphenyl)propanoate + NADH + H(+). The catalysed reaction is (2E)-3-(cis-5,6-dihydroxycyclohexa-1,3-dien-1-yl)prop-2-enoate + NAD(+) = (2E)-3-(2,3-dihydroxyphenyl)prop-2-enoate + NADH + H(+). It participates in aromatic compound metabolism; 3-phenylpropanoate degradation. Functionally, converts 3-phenylpropionate-dihydrodiol (PP-dihydrodiol) and cinnamic acid-dihydrodiol (CI-dihydrodiol) into 3-(2,3-dihydroxylphenyl)propanoic acid (DHPP) and 2,3-dihydroxicinnamic acid (DHCI), respectively. In Escherichia coli, this protein is 3-phenylpropionate-dihydrodiol/cinnamic acid-dihydrodiol dehydrogenase (hcaB).